Here is a 180-residue protein sequence, read N- to C-terminus: Riboflavin kinase (180 aa).

Mg(2+)-binding residues include Thr40 and Asn42. The active-site Nucleophile is the Glu117.

It belongs to the flavokinase family. Zn(2+) is required as a cofactor. It depends on Mg(2+) as a cofactor.

The catalysed reaction is riboflavin + ATP = FMN + ADP + H(+). Its pathway is cofactor biosynthesis; FMN biosynthesis; FMN from riboflavin (ATP route): step 1/1. Catalyzes the phosphorylation of riboflavin (vitamin B2) to form flavin mononucleotide (FMN) coenzyme. The chain is Riboflavin kinase (FMN1) from Meyerozyma guilliermondii (strain ATCC 6260 / CBS 566 / DSM 6381 / JCM 1539 / NBRC 10279 / NRRL Y-324) (Yeast).